Reading from the N-terminus, the 181-residue chain is UPF0397 protein SUB0313 (181 aa).

5 helical membrane passes run 11–31, 45–65, 69–89, 114–134, and 147–167; these read AIGIGAALFVIIGLFVPITIF, LFSVLFGPVAGFFIGFIGHML, FAGYGVWWSWVLPSGLVGLGI, VQALVNLISWAIVAPLGDILI, and LFAAFANTFTIGIGGTLLLIA.

This sequence belongs to the UPF0397 family.

It localises to the cell membrane. The chain is UPF0397 protein SUB0313 from Streptococcus uberis (strain ATCC BAA-854 / 0140J).